Consider the following 300-residue polypeptide: Platelet-derived growth factor D (300 aa).

Residues 1–114 form the CUB domain; it reads QVTGNGHVQS…PGFKIYYSFV (114 aa). Cys-53 and Cys-75 are disulfide-bonded. An N-linked (GlcNAc...) asparagine glycan is attached at Asn-220.

It belongs to the PDGF/VEGF growth factor family. Homodimer; disulfide-linked. Interacts with PDGFRB homodimers, and with heterodimers formed by PDGFRA and PDGFRB. In terms of processing, activated by proteolytic cleavage. Proteolytic removal of the N-terminal CUB domain releasing the core domain is necessary for unmasking the receptor-binding epitopes of the core domain. Cleavage after Arg-191 or Arg-193 by urokinase plasminogen activator gives rise to the active form.

The protein resides in the secreted. Its function is as follows. Growth factor that plays an essential role in the regulation of embryonic development, cell proliferation, cell migration, survival and chemotaxis. Potent mitogen for cells of mesenchymal origin. Plays an important role in wound healing. Induces macrophage recruitment, increased interstitial pressure, and blood vessel maturation during angiogenesis. Can initiate events that lead to a mesangial proliferative glomerulonephritis, including influx of monocytes and macrophages and production of extracellular matrix. The chain is Platelet-derived growth factor D (PDGFD) from Oryctolagus cuniculus (Rabbit).